The following is a 547-amino-acid chain: Chaperonin GroEL (547 aa).

ATP-binding positions include threonine 30–proline 33, lysine 51, aspartate 87–threonine 91, glycine 415, and aspartate 495.

Belongs to the chaperonin (HSP60) family. In terms of assembly, forms a cylinder of 14 subunits composed of two heptameric rings stacked back-to-back. Interacts with the co-chaperonin GroES.

Its subcellular location is the cytoplasm. The catalysed reaction is ATP + H2O + a folded polypeptide = ADP + phosphate + an unfolded polypeptide.. In terms of biological role, together with its co-chaperonin GroES, plays an essential role in assisting protein folding. The GroEL-GroES system forms a nano-cage that allows encapsulation of the non-native substrate proteins and provides a physical environment optimized to promote and accelerate protein folding. The chain is Chaperonin GroEL from Pasteurella multocida (strain Pm70).